A 321-amino-acid polypeptide reads, in one-letter code: NADPH-dependent D-xylose reductase (321 aa).

Catalysis depends on Tyr50, which acts as the Proton donor. Position 112 (His112) interacts with substrate. NADP(+)-binding positions include 167–168 (SN), 216–225 (SSFGPQSFVE), and 272–282 (KSNKKERLLGN).

It belongs to the aldo/keto reductase family.

The enzyme catalyses xylitol + NAD(+) = D-xylose + NADH + H(+). It catalyses the reaction xylitol + NADP(+) = D-xylose + NADPH + H(+). Its pathway is carbohydrate metabolism; D-xylose degradation. In terms of biological role, reduces D-xylose into xylitol. Preferentially utilizes NADPH as a cosubstrate. The polypeptide is NADPH-dependent D-xylose reductase (XYL1) (Candida boidinii (Yeast)).